The sequence spans 418 residues: L-rhamnose isomerase (418 aa).

Positions 262, 294, and 296 each coordinate Mn(2+).

This sequence belongs to the rhamnose isomerase family. It depends on Mn(2+) as a cofactor.

It is found in the cytoplasm. It carries out the reaction L-rhamnopyranose = L-rhamnulose. It participates in carbohydrate degradation; L-rhamnose degradation; glycerone phosphate from L-rhamnose: step 1/3. Its function is as follows. Catalyzes the interconversion of L-rhamnose and L-rhamnulose. The chain is L-rhamnose isomerase from Bacteroides thetaiotaomicron (strain ATCC 29148 / DSM 2079 / JCM 5827 / CCUG 10774 / NCTC 10582 / VPI-5482 / E50).